A 156-amino-acid polypeptide reads, in one-letter code: ATP synthase subunit b (156 aa).

A helical transmembrane segment spans residues 7 to 27; that stretch reads FFAQMVVFFILWWVVAKFIWP.

Belongs to the ATPase B chain family. In terms of assembly, F-type ATPases have 2 components, F(1) - the catalytic core - and F(0) - the membrane proton channel. F(1) has five subunits: alpha(3), beta(3), gamma(1), delta(1), epsilon(1). F(0) has three main subunits: a(1), b(2) and c(10-14). The alpha and beta chains form an alternating ring which encloses part of the gamma chain. F(1) is attached to F(0) by a central stalk formed by the gamma and epsilon chains, while a peripheral stalk is formed by the delta and b chains.

The protein localises to the cell inner membrane. F(1)F(0) ATP synthase produces ATP from ADP in the presence of a proton or sodium gradient. F-type ATPases consist of two structural domains, F(1) containing the extramembraneous catalytic core and F(0) containing the membrane proton channel, linked together by a central stalk and a peripheral stalk. During catalysis, ATP synthesis in the catalytic domain of F(1) is coupled via a rotary mechanism of the central stalk subunits to proton translocation. Its function is as follows. Component of the F(0) channel, it forms part of the peripheral stalk, linking F(1) to F(0). The polypeptide is ATP synthase subunit b (Cupriavidus metallidurans (strain ATCC 43123 / DSM 2839 / NBRC 102507 / CH34) (Ralstonia metallidurans)).